The primary structure comprises 271 residues: Regulatory protein RecX (271 aa).

This sequence belongs to the RecX family.

It is found in the cytoplasm. Modulates RecA activity. The sequence is that of Regulatory protein RecX from Geobacillus sp. (strain WCH70).